The chain runs to 222 residues: Iodotyrosine deiodinase (222 aa).

Residues 34–38 and 61–62 each bind FMN; these read RRTVR and PS. Residues glutamate 91, tyrosine 95, and lysine 116 each coordinate 3-iodo-L-tyrosine. FMN-binding positions include 171–173 and arginine 212; that span reads THT.

It belongs to the nitroreductase family. Homodimer. It depends on FMN as a cofactor.

The catalysed reaction is 2 iodide + L-tyrosine + 2 NADP(+) = 3,5-diiodo-L-tyrosine + 2 NADPH + H(+). It catalyses the reaction iodide + L-tyrosine + NADP(+) = 3-iodo-L-tyrosine + NADPH. It carries out the reaction 3-iodo-L-tyrosine + iodide + NADP(+) = 3,5-diiodo-L-tyrosine + NADPH + H(+). The enzyme catalyses L-tyrosine + chloride + NADP(+) = 3-chloro-L-tyrosine + NADPH. The catalysed reaction is bromide + L-tyrosine + NADP(+) = 3-bromo-L-tyrosine + NADPH. Its function is as follows. Catalyzes the dehalogenation of halotyrosines such as 3-iodo-L-tyrosine and 3,5-diiodo-L-tyrosine. Likely to also catalyze the dehalogenation of other halotyrosines such as 3-bromo-L-tyrosine, 3-chloro-L-tyrosine and 3-iodo-L-tyrosine. Activity towards 3-iodo-L-tyrosine is much stronger than activity towards 3,5-diiodo-L-tyrosine and 2-iodophenol. This is Iodotyrosine deiodinase from Haliscomenobacter hydrossis (strain ATCC 27775 / DSM 1100 / LMG 10767 / O).